A 188-amino-acid polypeptide reads, in one-letter code: Sec-independent protein translocase protein TatB (188 aa).

A helical membrane pass occupies residues 1–21 (MFDIGWSELVVIGVVALVAIG). The segment at 147-188 (LPVPAETHALATTDLAPPDLAHPAPAHPEPTNSEPAKDAKAS) is disordered. The span at 160–170 (DLAPPDLAHPA) shows a compositional bias: low complexity.

It belongs to the TatB family. In terms of assembly, the Tat system comprises two distinct complexes: a TatABC complex, containing multiple copies of TatA, TatB and TatC subunits, and a separate TatA complex, containing only TatA subunits. Substrates initially bind to the TatABC complex, which probably triggers association of the separate TatA complex to form the active translocon.

The protein resides in the cell inner membrane. Part of the twin-arginine translocation (Tat) system that transports large folded proteins containing a characteristic twin-arginine motif in their signal peptide across membranes. Together with TatC, TatB is part of a receptor directly interacting with Tat signal peptides. TatB may form an oligomeric binding site that transiently accommodates folded Tat precursor proteins before their translocation. The sequence is that of Sec-independent protein translocase protein TatB from Rhodopseudomonas palustris (strain HaA2).